The following is a 429-amino-acid chain: Serine--tRNA ligase (429 aa).

Thr235–Glu237 contacts L-serine. Position 266 to 268 (Arg266 to Glu268) interacts with ATP. Glu289 serves as a coordination point for L-serine. Glu353–Ser356 contributes to the ATP binding site. L-serine is bound at residue Ser389.

It belongs to the class-II aminoacyl-tRNA synthetase family. Type-1 seryl-tRNA synthetase subfamily. Homodimer. The tRNA molecule binds across the dimer.

Its subcellular location is the cytoplasm. The enzyme catalyses tRNA(Ser) + L-serine + ATP = L-seryl-tRNA(Ser) + AMP + diphosphate + H(+). It carries out the reaction tRNA(Sec) + L-serine + ATP = L-seryl-tRNA(Sec) + AMP + diphosphate + H(+). The protein operates within aminoacyl-tRNA biosynthesis; selenocysteinyl-tRNA(Sec) biosynthesis; L-seryl-tRNA(Sec) from L-serine and tRNA(Sec): step 1/1. In terms of biological role, catalyzes the attachment of serine to tRNA(Ser). Is also able to aminoacylate tRNA(Sec) with serine, to form the misacylated tRNA L-seryl-tRNA(Sec), which will be further converted into selenocysteinyl-tRNA(Sec). This chain is Serine--tRNA ligase, found in Actinobacillus succinogenes (strain ATCC 55618 / DSM 22257 / CCUG 43843 / 130Z).